A 516-amino-acid polypeptide reads, in one-letter code: Maturase K (516 aa).

It belongs to the intron maturase 2 family. MatK subfamily.

The protein resides in the plastid. It localises to the chloroplast. Functionally, usually encoded in the trnK tRNA gene intron. Probably assists in splicing its own and other chloroplast group II introns. This is Maturase K from Colchicum speciosum (Giant meadow saffron).